The following is a 534-amino-acid chain: Peptide chain release factor 3 (534 aa).

The tr-type G domain maps to 9–278; that stretch reads ARRRTFAIIS…FFIEHAPPPQ (270 aa). GTP is bound by residues 18–25, 86–90, and 140–143; these read SHPDAGKT, DTPGH, and NKLD.

It belongs to the TRAFAC class translation factor GTPase superfamily. Classic translation factor GTPase family. PrfC subfamily.

It localises to the cytoplasm. Its function is as follows. Increases the formation of ribosomal termination complexes and stimulates activities of RF-1 and RF-2. It binds guanine nucleotides and has strong preference for UGA stop codons. It may interact directly with the ribosome. The stimulation of RF-1 and RF-2 is significantly reduced by GTP and GDP, but not by GMP. This chain is Peptide chain release factor 3, found in Xanthomonas oryzae pv. oryzae (strain MAFF 311018).